Reading from the N-terminus, the 329-residue chain is DNA-directed RNA polymerase subunit alpha (329 aa).

The tract at residues Met1 to Glu234 is alpha N-terminal domain (alpha-NTD). Residues Ile248–Asp329 form an alpha C-terminal domain (alpha-CTD) region.

Belongs to the RNA polymerase alpha chain family. In terms of assembly, homodimer. The RNAP catalytic core consists of 2 alpha, 1 beta, 1 beta' and 1 omega subunit. When a sigma factor is associated with the core the holoenzyme is formed, which can initiate transcription.

The catalysed reaction is RNA(n) + a ribonucleoside 5'-triphosphate = RNA(n+1) + diphosphate. Functionally, DNA-dependent RNA polymerase catalyzes the transcription of DNA into RNA using the four ribonucleoside triphosphates as substrates. In Saccharophagus degradans (strain 2-40 / ATCC 43961 / DSM 17024), this protein is DNA-directed RNA polymerase subunit alpha.